The chain runs to 991 residues: Translation initiation factor IF-2 (991 aa).

Disordered regions lie at residues 126–220 (QADH…DVGE) and 325–359 (VKAAGDGDTAPAADDALAGKKKPGKKKKKPDVDEK). Polar residues-rich tracts occupy residues 138–160 (QTESAVQTESAVQTESAVQTEPA) and 201–210 (PAAQTESAVQ). Residues 326–340 (KAAGDGDTAPAADDA) show a composition bias toward low complexity. The span at 343 to 353 (GKKKPGKKKKK) shows a compositional bias: basic residues. A tr-type G domain is found at 488–658 (IRPPVVTIMG…LTEAEIRELK (171 aa)). Residues 497 to 504 (GHVDHGKT) are G1. 497–504 (GHVDHGKT) contributes to the GTP binding site. Positions 522 to 526 (GITQH) are G2. Positions 544-547 (DTPG) are G3. GTP contacts are provided by residues 544 to 548 (DTPGH) and 598 to 601 (NKID). A G4 region spans residues 598 to 601 (NKID). The G5 stretch occupies residues 634–636 (SAK).

The protein belongs to the TRAFAC class translation factor GTPase superfamily. Classic translation factor GTPase family. IF-2 subfamily.

Its subcellular location is the cytoplasm. Functionally, one of the essential components for the initiation of protein synthesis. Protects formylmethionyl-tRNA from spontaneous hydrolysis and promotes its binding to the 30S ribosomal subunits. Also involved in the hydrolysis of GTP during the formation of the 70S ribosomal complex. This chain is Translation initiation factor IF-2, found in Chlorobium phaeobacteroides (strain DSM 266 / SMG 266 / 2430).